Reading from the N-terminus, the 354-residue chain is Stearoyl-CoA desaturase (354 aa).

Positions 1–28 (MPGHLLQEEMTSSYTTTTTTITEPPSES) are disordered. The Cytoplasmic portion of the chain corresponds to 1–67 (MPGHLLQEEM…EGPPPKLEYV (67 aa)). A compositionally biased stretch (low complexity) spans 8–28 (EEMTSSYTTTTTTITEPPSES). Residues 68–88 (WRNIILMALLHLGALYGLVLV) traverse the membrane as a helical segment. N70 contributes to the substrate binding site. Residues 89–92 (PSSK) are Lumenal-facing. A helical transmembrane segment spans residues 93 to 113 (VYTLLWAFVYYVISIEGIGAG). The Cytoplasmic segment spans residues 114–212 (VHRLWSHRTY…EKLVMFQRRY (99 aa)). Fe cation contacts are provided by H115 and H120. Residues 115 to 120 (HRLWSH) carry the Histidine box-1 motif. The substrate site is built by N143, R150, and D151. Fe cation contacts are provided by H152, H155, and H156. The Histidine box-2 motif lies at 152-156 (HRAHH). Positions 183 and 184 each coordinate substrate. S198 is subject to Phosphoserine. Residues 213–232 (YKPAILLMCFILPTFVPWYF) form a helical membrane-spanning segment. Residues 233–236 (WGEA) are Lumenal-facing. A helical transmembrane segment spans residues 237 to 258 (FVNSLCVSTFLRYTLVLNATWL). W257 contacts substrate. The Cytoplasmic segment spans residues 259 to 354 (VNSAAHLYGY…RTGDGSCKSG (96 aa)). Positions 264, 293, 296, and 297 each coordinate Fe cation. The Histidine box-3 motif lies at 293–297 (HNYHH).

This sequence belongs to the fatty acid desaturase type 1 family. Requires Fe(2+) as cofactor.

Its subcellular location is the endoplasmic reticulum membrane. It catalyses the reaction octadecanoyl-CoA + 2 Fe(II)-[cytochrome b5] + O2 + 2 H(+) = (9Z)-octadecenoyl-CoA + 2 Fe(III)-[cytochrome b5] + 2 H2O. It carries out the reaction hexadecanoyl-CoA + 2 Fe(II)-[cytochrome b5] + O2 + 2 H(+) = (9Z)-hexadecenoyl-CoA + 2 Fe(III)-[cytochrome b5] + 2 H2O. In terms of biological role, stearoyl-CoA desaturase that utilizes O(2) and electrons from reduced cytochrome b5 to introduce the first double bond into saturated fatty acyl-CoA substrates. Catalyzes the insertion of a cis double bond at the delta-9 position into fatty acyl-CoA substrates including palmitoyl-CoA and stearoyl-CoA. Gives rise to a mixture of 16:1 and 18:1 unsaturated fatty acids. Plays an important role in lipid biosynthesis. Plays an important role in regulating the expression of genes that are involved in lipogenesis and in regulating mitochondrial fatty acid oxidation. Plays an important role in body energy homeostasis. Contributes to the biosynthesis of membrane phospholipids, cholesterol esters and triglycerides. This Mesocricetus auratus (Golden hamster) protein is Stearoyl-CoA desaturase (SCD).